Consider the following 216-residue polypeptide: 3-keto-L-gulonate-6-phosphate decarboxylase UlaD (216 aa).

D11 is a substrate binding site. Positions 33 and 62 each coordinate Mg(2+). Residue R192 coordinates substrate.

It belongs to the HPS/KGPDC family. KGPDC subfamily. Homodimer. The cofactor is Mg(2+).

It catalyses the reaction 3-dehydro-L-gulonate 6-phosphate + H(+) = L-xylulose 5-phosphate + CO2. Its pathway is cofactor degradation; L-ascorbate degradation; D-xylulose 5-phosphate from L-ascorbate: step 2/4. Its function is as follows. Catalyzes the decarboxylation of 3-keto-L-gulonate-6-P into L-xylulose-5-P. Is involved in the anaerobic L-ascorbate utilization. The polypeptide is 3-keto-L-gulonate-6-phosphate decarboxylase UlaD (Salmonella typhi).